The chain runs to 432 residues: Mannan endo-1,4-beta-mannosidase 1 (432 aa).

The first 28 residues, 1–28 (MRLLGAHRAALLVLACVVVVVIHGLGEA), serve as a signal peptide directing secretion. The substrate site is built by W93 and N209. E210 functions as the Proton donor in the catalytic mechanism. Position 289 (Y289) interacts with substrate. Catalysis depends on E329, which acts as the Nucleophile. Substrate is bound at residue W371.

This sequence belongs to the glycosyl hydrolase 5 (cellulase A) family. Ubiquitous.

The protein localises to the secreted. The catalysed reaction is Random hydrolysis of (1-&gt;4)-beta-D-mannosidic linkages in mannans, galactomannans and glucomannans.. The chain is Mannan endo-1,4-beta-mannosidase 1 (MAN1) from Oryza sativa subsp. japonica (Rice).